We begin with the raw amino-acid sequence, 249 residues long: 3-deoxy-D-manno-octulosonic acid kinase (249 aa).

Asp175 is a catalytic residue.

This sequence belongs to the protein kinase superfamily. KdkA/RfaP family.

The protein localises to the cell inner membrane. It carries out the reaction an alpha-Kdo-(2-&gt;6)-lipid IVA + ATP = a 4-O-phospho-alpha-Kdo-(2-&gt;6)-lipid IVA + ADP + H(+). It functions in the pathway bacterial outer membrane biogenesis; LPS core biosynthesis. Catalyzes the ATP-dependent phosphorylation of the 3-deoxy-D-manno-octulosonic acid (Kdo) residue in Kdo-lipid IV(A) at the 4-OH position. The polypeptide is 3-deoxy-D-manno-octulosonic acid kinase (Xanthomonas oryzae pv. oryzae (strain PXO99A)).